Reading from the N-terminus, the 142-residue chain is Small ribosomal subunit protein uS9 (142 aa).

This sequence belongs to the universal ribosomal protein uS9 family. In terms of assembly, component of the small ribosomal subunit. Mature ribosomes consist of a small (40S) and a large (60S) subunit. The 40S subunit contains about 32 different proteins and 1 molecule of RNA (18S). The 60S subunit contains 45 different proteins and 3 molecules of RNA (25S, 5.8S and 5S).

Its subcellular location is the cytoplasm. Functionally, component of the ribosome, a large ribonucleoprotein complex responsible for the synthesis of proteins in the cell. The small ribosomal subunit (SSU) binds messenger RNAs (mRNAs) and translates the encoded message by selecting cognate aminoacyl-transfer RNA (tRNA) molecules. The large subunit (LSU) contains the ribosomal catalytic site termed the peptidyl transferase center (PTC), which catalyzes the formation of peptide bonds, thereby polymerizing the amino acids delivered by tRNAs into a polypeptide chain. The nascent polypeptides leave the ribosome through a tunnel in the LSU and interact with protein factors that function in enzymatic processing, targeting, and the membrane insertion of nascent chains at the exit of the ribosomal tunnel. In Candida albicans (strain SC5314 / ATCC MYA-2876) (Yeast), this protein is Small ribosomal subunit protein uS9 (RPS16A).